Reading from the N-terminus, the 217-residue chain is Probable GTP-binding protein EngB (217 aa).

One can recognise an EngB-type G domain in the interval 32 to 205 (GTPQIAFAGR…RKIVYSLIET (174 aa)). GTP is bound by residues 40-47 (GRSNAGKS), 67-71 (GKTKL), 85-88 (DLPG), 152-155 (TKID), and 184-186 (VSN). Mg(2+)-binding residues include Ser47 and Thr69.

The protein belongs to the TRAFAC class TrmE-Era-EngA-EngB-Septin-like GTPase superfamily. EngB GTPase family. Mg(2+) serves as cofactor.

Functionally, necessary for normal cell division and for the maintenance of normal septation. In Leptospira interrogans serogroup Icterohaemorrhagiae serovar copenhageni (strain Fiocruz L1-130), this protein is Probable GTP-binding protein EngB.